Consider the following 186-residue polypeptide: UPF0200 protein PH1008 (186 aa).

7–14 (GMPGSGKG) contributes to the ATP binding site.

It belongs to the UPF0200 family.

This Pyrococcus horikoshii (strain ATCC 700860 / DSM 12428 / JCM 9974 / NBRC 100139 / OT-3) protein is UPF0200 protein PH1008.